The following is a 319-amino-acid chain: ATP-dependent 6-phosphofructokinase (319 aa).

Residue Gly11 participates in ATP binding. 21–25 lines the ADP pocket; it reads RAVTR. ATP contacts are provided by residues 72 to 73 and 102 to 105; these read RY and GDGS. Residue Asp103 coordinates Mg(2+). 125-127 lines the substrate pocket; that stretch reads TID. Asp127 functions as the Proton acceptor in the catalytic mechanism. Arg154 provides a ligand contact to ADP. Substrate contacts are provided by residues Arg162 and 169-171; that span reads MGR. ADP-binding positions include 185 to 187 and 213 to 215; these read GAD and KDH. Substrate contacts are provided by residues Glu222, Arg243, and 249-252; that span reads HMQR.

This sequence belongs to the phosphofructokinase type A (PFKA) family. ATP-dependent PFK group I subfamily. Prokaryotic clade 'B1' sub-subfamily. As to quaternary structure, homotetramer. The cofactor is Mg(2+).

The protein resides in the cytoplasm. It catalyses the reaction beta-D-fructose 6-phosphate + ATP = beta-D-fructose 1,6-bisphosphate + ADP + H(+). The protein operates within carbohydrate degradation; glycolysis; D-glyceraldehyde 3-phosphate and glycerone phosphate from D-glucose: step 3/4. Allosterically activated by ADP and other diphosphonucleosides, and allosterically inhibited by phosphoenolpyruvate. The binding affinities for these effectors are decreased however, and therefore the allosteric effect becomes apparent only at high effector concentrations. In terms of biological role, catalyzes the phosphorylation of D-fructose 6-phosphate to fructose 1,6-bisphosphate by ATP, the first committing step of glycolysis. This chain is ATP-dependent 6-phosphofructokinase, found in Lactobacillus delbrueckii subsp. bulgaricus.